Consider the following 352-residue polypeptide: Cyclin-dependent kinase-like 1 (352 aa).

Residues 4-287 (YEKIGKIGEG…CEQLLQHPYF (284 aa)) form the Protein kinase domain. ATP-binding positions include 10 to 18 (IGEGSYGVV) and Lys33. Residues 45–51 (KKIALRE) carry the [NKR]KIAxRE motif. Asp126 serves as the catalytic Proton acceptor.

The protein belongs to the protein kinase superfamily. CMGC Ser/Thr protein kinase family. CDC2/CDKX subfamily.

It localises to the cytoplasm. It is found in the nucleus. The enzyme catalyses L-seryl-[protein] + ATP = O-phospho-L-seryl-[protein] + ADP + H(+). The catalysed reaction is L-threonyl-[protein] + ATP = O-phospho-L-threonyl-[protein] + ADP + H(+). This is Cyclin-dependent kinase-like 1 from Mus musculus (Mouse).